The primary structure comprises 166 residues: PTS system glucose-specific EIIA component (166 aa).

The PTS EIIA type-1 domain occupies 36-140 (DVVFSEKIVG…SVLTPIVISN (105 aa)). 2 residues coordinate Zn(2+): H73 and H88. Residue H88 is the Tele-phosphohistidine intermediate; for EIIA activity of the active site. H88 is modified (phosphohistidine; by HPr).

In terms of assembly, heterodimer with glycerol kinase (glpk). It depends on Zn(2+) as a cofactor.

It localises to the cytoplasm. In terms of biological role, the phosphoenolpyruvate-dependent sugar phosphotransferase system (sugar PTS), a major carbohydrate active transport system, catalyzes the phosphorylation of incoming sugar substrates concomitantly with their translocation across the cell membrane. The enzyme II complex composed of PtsG and Crr is involved in glucose transport. The protein is PTS system glucose-specific EIIA component (crr) of Haemophilus influenzae (strain ATCC 51907 / DSM 11121 / KW20 / Rd).